Consider the following 117-residue polypeptide: Large ribosomal subunit protein uL18 (117 aa).

The protein belongs to the universal ribosomal protein uL18 family. In terms of assembly, part of the 50S ribosomal subunit; part of the 5S rRNA/L5/L18/L25 subcomplex. Contacts the 5S and 23S rRNAs.

Functionally, this is one of the proteins that bind and probably mediate the attachment of the 5S RNA into the large ribosomal subunit, where it forms part of the central protuberance. The sequence is that of Large ribosomal subunit protein uL18 from Vibrio vulnificus (strain CMCP6).